The sequence spans 187 residues: Elongation factor P (187 aa).

Belongs to the elongation factor P family.

The protein localises to the cytoplasm. It functions in the pathway protein biosynthesis; polypeptide chain elongation. Functionally, involved in peptide bond synthesis. Stimulates efficient translation and peptide-bond synthesis on native or reconstituted 70S ribosomes in vitro. Probably functions indirectly by altering the affinity of the ribosome for aminoacyl-tRNA, thus increasing their reactivity as acceptors for peptidyl transferase. The protein is Elongation factor P of Thermodesulfovibrio yellowstonii (strain ATCC 51303 / DSM 11347 / YP87).